The following is a 200-amino-acid chain: Small ribosomal subunit protein uS4 (200 aa).

The S4 RNA-binding domain maps to 92 to 155 (SRLDAVVYQL…QKLNIIAESV (64 aa)).

Belongs to the universal ribosomal protein uS4 family. In terms of assembly, part of the 30S ribosomal subunit. Contacts protein S5. The interaction surface between S4 and S5 is involved in control of translational fidelity.

In terms of biological role, one of the primary rRNA binding proteins, it binds directly to 16S rRNA where it nucleates assembly of the body of the 30S subunit. Functionally, with S5 and S12 plays an important role in translational accuracy. This chain is Small ribosomal subunit protein uS4, found in Macrococcus caseolyticus (strain JCSC5402) (Macrococcoides caseolyticum).